The chain runs to 474 residues: Poly(A) polymerase catalytic subunit (474 aa).

Active-site residues include Asp-193 and Asp-195.

Belongs to the poxviridae poly(A) polymerase catalytic subunit family. As to quaternary structure, heterodimer of a large (catalytic) subunit and a small (regulatory) subunit.

The enzyme catalyses RNA(n) + ATP = RNA(n)-3'-adenine ribonucleotide + diphosphate. Polymerase that creates the 3'-poly(A) tail of mRNA's. This is Poly(A) polymerase catalytic subunit (PAPL) from Bos taurus (Bovine).